Here is a 465-residue protein sequence, read N- to C-terminus: Putative mannose-1-phosphate guanylyltransferase (465 aa).

It belongs to the mannose-6-phosphate isomerase type 2 family.

The enzyme catalyses alpha-D-mannose 1-phosphate + GTP + H(+) = GDP-alpha-D-mannose + diphosphate. Its pathway is nucleotide-sugar biosynthesis; GDP-alpha-D-mannose biosynthesis; GDP-alpha-D-mannose from alpha-D-mannose 1-phosphate (GTP route): step 1/1. It participates in bacterial outer membrane biogenesis; LPS O-antigen biosynthesis. In Vibrio cholerae serotype O1 (strain ATCC 39315 / El Tor Inaba N16961), this protein is Putative mannose-1-phosphate guanylyltransferase (rfbA).